Here is a 33-residue protein sequence, read N- to C-terminus: DNA-directed RNA polymerase subunit beta' (33 aa).

This sequence belongs to the RNA polymerase beta' chain family. RpoC1 subfamily. As to quaternary structure, in plastids the minimal PEP RNA polymerase catalytic core is composed of four subunits: alpha, beta, beta', and beta''. When a (nuclear-encoded) sigma factor is associated with the core the holoenzyme is formed, which can initiate transcription.

It localises to the plastid. Its subcellular location is the chloroplast. It carries out the reaction RNA(n) + a ribonucleoside 5'-triphosphate = RNA(n+1) + diphosphate. Its function is as follows. DNA-dependent RNA polymerase catalyzes the transcription of DNA into RNA using the four ribonucleoside triphosphates as substrates. The protein is DNA-directed RNA polymerase subunit beta' (rpoC1) of Heterosigma akashiwo (Chromophytic alga).